Here is a 315-residue protein sequence, read N- to C-terminus: Methionyl-tRNA formyltransferase (315 aa).

113–116 (SLLP) serves as a coordination point for (6S)-5,6,7,8-tetrahydrofolate.

The protein belongs to the Fmt family.

The catalysed reaction is L-methionyl-tRNA(fMet) + (6R)-10-formyltetrahydrofolate = N-formyl-L-methionyl-tRNA(fMet) + (6S)-5,6,7,8-tetrahydrofolate + H(+). Its function is as follows. Attaches a formyl group to the free amino group of methionyl-tRNA(fMet). The formyl group appears to play a dual role in the initiator identity of N-formylmethionyl-tRNA by promoting its recognition by IF2 and preventing the misappropriation of this tRNA by the elongation apparatus. In Klebsiella pneumoniae subsp. pneumoniae (strain ATCC 700721 / MGH 78578), this protein is Methionyl-tRNA formyltransferase.